Here is a 400-residue protein sequence, read N- to C-terminus: NADH dehydrogenase-like protein Rv1812c (400 aa).

The protein belongs to the NADH dehydrogenase family. FAD serves as cofactor.

The protein is NADH dehydrogenase-like protein Rv1812c of Mycobacterium tuberculosis (strain ATCC 25618 / H37Rv).